Reading from the N-terminus, the 434-residue chain is Glutamyl-tRNA reductase (434 aa).

Residues 52–55, serine 115, 120–122, and glutamine 126 contribute to the substrate site; these read TCNR and ETQ. Residue cysteine 53 is the Nucleophile of the active site. Residue 195–200 participates in NADP(+) binding; that stretch reads GAGEMI.

The protein belongs to the glutamyl-tRNA reductase family. Homodimer.

It catalyses the reaction (S)-4-amino-5-oxopentanoate + tRNA(Glu) + NADP(+) = L-glutamyl-tRNA(Glu) + NADPH + H(+). It functions in the pathway porphyrin-containing compound metabolism; protoporphyrin-IX biosynthesis; 5-aminolevulinate from L-glutamyl-tRNA(Glu): step 1/2. Catalyzes the NADPH-dependent reduction of glutamyl-tRNA(Glu) to glutamate 1-semialdehyde (GSA). The sequence is that of Glutamyl-tRNA reductase from Cupriavidus necator (strain ATCC 17699 / DSM 428 / KCTC 22496 / NCIMB 10442 / H16 / Stanier 337) (Ralstonia eutropha).